The following is a 303-amino-acid chain: Hemolysin E (303 aa).

C87 and C285 are oxidised to a cystine. A helical transmembrane segment spans residues 179–199 (AGAAAGIVAGPFGLIISYSIA).

This sequence belongs to the hemolysin E family. Monomer and oligomer. In periplasm, it is present as a monomer, while in outer membrane vesicles, it oligomerizes to form a pore structure that is active. The pore is formed by a dodecamer. In periplasm, it forms a disulfide bond, which prevents the oligomerization. In outer membrane vesicles, the redox status prevents formation of the disulfide bond, leading to oligomerization and pore formation.

The protein localises to the secreted. The protein resides in the periplasm. It localises to the host cell membrane. Toxin, which has some hemolytic activity towards mammalian cells. Acts by forming a pore-like structure upon contact with mammalian cells. The chain is Hemolysin E (hlyE) from Salmonella paratyphi A (strain ATCC 9150 / SARB42).